The sequence spans 502 residues: Probable malate:quinone oxidoreductase (502 aa).

It belongs to the MQO family. FAD serves as cofactor.

It carries out the reaction (S)-malate + a quinone = a quinol + oxaloacetate. It functions in the pathway carbohydrate metabolism; tricarboxylic acid cycle; oxaloacetate from (S)-malate (quinone route): step 1/1. The polypeptide is Probable malate:quinone oxidoreductase (Oceanobacillus iheyensis (strain DSM 14371 / CIP 107618 / JCM 11309 / KCTC 3954 / HTE831)).